The primary structure comprises 176 residues: 3-hydroxyanthranilate 3,4-dioxygenase (176 aa).

Residue Arg44 participates in O2 binding. Fe cation contacts are provided by His48, Glu54, and His92. Glu54 serves as a coordination point for substrate. The substrate site is built by Arg96 and Glu106. Residues Cys121, Cys124, Cys158, and Cys161 each contribute to the Fe cation site.

It belongs to the 3-HAO family. In terms of assembly, homodimer. Requires Fe(2+) as cofactor.

The catalysed reaction is 3-hydroxyanthranilate + O2 = (2Z,4Z)-2-amino-3-carboxymuconate 6-semialdehyde. It participates in cofactor biosynthesis; NAD(+) biosynthesis; quinolinate from L-kynurenine: step 3/3. Functionally, catalyzes the oxidative ring opening of 3-hydroxyanthranilate to 2-amino-3-carboxymuconate semialdehyde, which spontaneously cyclizes to quinolinate. The sequence is that of 3-hydroxyanthranilate 3,4-dioxygenase from Xanthomonas euvesicatoria pv. vesicatoria (strain 85-10) (Xanthomonas campestris pv. vesicatoria).